We begin with the raw amino-acid sequence, 153 residues long: Protein-export protein SecB (153 aa).

The protein belongs to the SecB family. As to quaternary structure, homotetramer, a dimer of dimers. One homotetramer interacts with 1 SecA dimer.

It localises to the cytoplasm. One of the proteins required for the normal export of preproteins out of the cell cytoplasm. It is a molecular chaperone that binds to a subset of precursor proteins, maintaining them in a translocation-competent state. It also specifically binds to its receptor SecA. The chain is Protein-export protein SecB from Edwardsiella ictaluri (strain 93-146).